We begin with the raw amino-acid sequence, 585 residues long: MRKTKIVCTIGPASESEEMIEKLINAGMNVARLNFSHGSHEEHKGRIDTIRKVAKRLDKIVAILLDTKGPEIRTHNMKDGIIELERGNEVIVSMNEVEGTPEKFSVTYENLINDVQVGSYILLDDGLIELQVKDIDHAKKEVKCDILNSGELKNKKGVNLPGVRVSLPGITEKDAEDIRFGIKENVDFIAASFVRRPSDVLEIREILEEQKANISVFPKIENQEGIDNIEEILEVSDGLMVARGDMGVEIPPEKVPMVQKDLIRQCNKLGKPVITATQMLDSMQRNPRATRAEASDVANAIYDGTDAVMLSGETAAGLYPEEAVKTMRNIAVSAEAAQDYKKLLSDRTKLVETSLVNAIGISVAHTALNLNVKAIVAATESGSTARTISKYRPHSDIIAVTPSEETARQCSIVWGVQPVVKKGRKSTDALLNNAVATAVETGRVTNGDLIIITAGVPTGETGTTNMMKIHLVGDEIANGQGIGRGSVVGTTLVAETVKDLEGKDLSDKVIVTNSIDETFVPYVEKALGLITEENGITSPSAIVGLEKGIPTVVGVEKAVKNISNNVLVTIDAAQGKIFEGYANVL.

Substrate is bound at residue arginine 32. The K(+) site is built by asparagine 34, serine 36, aspartate 66, and threonine 67. 34–37 (NFSH) provides a ligand contact to ATP. Arginine 73 and lysine 156 together coordinate ATP. Residue glutamate 221 coordinates Mg(2+). Positions 244, 245, and 277 each coordinate substrate. Aspartate 245 is a Mg(2+) binding site.

The protein belongs to the pyruvate kinase family. In the C-terminal section; belongs to the PEP-utilizing enzyme family. Mg(2+) serves as cofactor. The cofactor is K(+).

It carries out the reaction pyruvate + ATP = phosphoenolpyruvate + ADP + H(+). Its pathway is carbohydrate degradation; glycolysis; pyruvate from D-glyceraldehyde 3-phosphate: step 5/5. The chain is Pyruvate kinase (pyk) from Staphylococcus aureus (strain MRSA252).